Consider the following 209-residue polypeptide: Large ribosomal subunit protein uL3 (209 aa).

The segment at 126-148 is disordered; sequence HGQSRGPMAHGSRYHRRPGSMGP.

This sequence belongs to the universal ribosomal protein uL3 family. In terms of assembly, part of the 50S ribosomal subunit. Forms a cluster with proteins L14 and L19.

One of the primary rRNA binding proteins, it binds directly near the 3'-end of the 23S rRNA, where it nucleates assembly of the 50S subunit. The polypeptide is Large ribosomal subunit protein uL3 (Listeria innocua serovar 6a (strain ATCC BAA-680 / CLIP 11262)).